Here is a 375-residue protein sequence, read N- to C-terminus: Putative type I specificity subunit S.MpnORF638P (375 aa).

It belongs to the type-I restriction system S methylase family. As to quaternary structure, the methyltransferase is composed of M and S polypeptides.

In terms of biological role, the specificity (S) subunit of a type I methyltransferase (MTase); this subunit dictates DNA sequence specificity. The single R subunit has multiple frameshifts and is probably not expressed. The sequence is that of Putative type I specificity subunit S.MpnORF638P from Mycoplasma pneumoniae (strain ATCC 29342 / M129 / Subtype 1) (Mycoplasmoides pneumoniae).